The sequence spans 347 residues: Succinylglutamate desuccinylase (347 aa).

Positions 64, 67, and 159 each coordinate Zn(2+). E222 is a catalytic residue.

It belongs to the AspA/AstE family. Succinylglutamate desuccinylase subfamily. Requires Zn(2+) as cofactor.

It carries out the reaction N-succinyl-L-glutamate + H2O = L-glutamate + succinate. Its pathway is amino-acid degradation; L-arginine degradation via AST pathway; L-glutamate and succinate from L-arginine: step 5/5. In terms of biological role, transforms N(2)-succinylglutamate into succinate and glutamate. This is Succinylglutamate desuccinylase from Burkholderia cenocepacia (strain ATCC BAA-245 / DSM 16553 / LMG 16656 / NCTC 13227 / J2315 / CF5610) (Burkholderia cepacia (strain J2315)).